Reading from the N-terminus, the 508-residue chain is Maturase K (508 aa).

It belongs to the intron maturase 2 family. MatK subfamily.

It localises to the plastid. Its subcellular location is the chloroplast. In terms of biological role, usually encoded in the trnK tRNA gene intron. Probably assists in splicing its own and other chloroplast group II introns. The sequence is that of Maturase K from Wolffia arrhiza (Rootless water-meal).